We begin with the raw amino-acid sequence, 187 residues long: Protein GrpE (187 aa).

The segment at 1 to 38 (MSEEKQTVEQNETEEQEIIEEQAAADEQQEETNESELL) is disordered. Positions 11 to 34 (NETEEQEIIEEQAAADEQQEETNE) are enriched in acidic residues.

Belongs to the GrpE family. In terms of assembly, homodimer.

It localises to the cytoplasm. Functionally, participates actively in the response to hyperosmotic and heat shock by preventing the aggregation of stress-denatured proteins, in association with DnaK and GrpE. It is the nucleotide exchange factor for DnaK and may function as a thermosensor. Unfolded proteins bind initially to DnaJ; upon interaction with the DnaJ-bound protein, DnaK hydrolyzes its bound ATP, resulting in the formation of a stable complex. GrpE releases ADP from DnaK; ATP binding to DnaK triggers the release of the substrate protein, thus completing the reaction cycle. Several rounds of ATP-dependent interactions between DnaJ, DnaK and GrpE are required for fully efficient folding. The protein is Protein GrpE of Bacillus subtilis (strain 168).